Reading from the N-terminus, the 245-residue chain is 2,3-bisphosphoglycerate-dependent phosphoglycerate mutase (245 aa).

Substrate contacts are provided by residues 8–15, 21–22, Arg60, 87–90, Lys98, 114–115, and 183–184; these read RHGQSLWN, TG, ERHY, RR, and GN. Catalysis depends on His9, which acts as the Tele-phosphohistidine intermediate. Catalysis depends on Glu87, which acts as the Proton donor/acceptor.

Belongs to the phosphoglycerate mutase family. BPG-dependent PGAM subfamily.

It carries out the reaction (2R)-2-phosphoglycerate = (2R)-3-phosphoglycerate. It participates in carbohydrate degradation; glycolysis; pyruvate from D-glyceraldehyde 3-phosphate: step 3/5. Catalyzes the interconversion of 2-phosphoglycerate and 3-phosphoglycerate. The polypeptide is 2,3-bisphosphoglycerate-dependent phosphoglycerate mutase (Bacillus anthracis (strain A0248)).